A 705-amino-acid polypeptide reads, in one-letter code: 1,4-alpha-glucan branching enzyme GlgB (705 aa).

Aspartate 393 serves as the catalytic Nucleophile. Glutamate 446 functions as the Proton donor in the catalytic mechanism.

It belongs to the glycosyl hydrolase 13 family. GlgB subfamily. Monomer.

The catalysed reaction is Transfers a segment of a (1-&gt;4)-alpha-D-glucan chain to a primary hydroxy group in a similar glucan chain.. The protein operates within glycan biosynthesis; glycogen biosynthesis. Catalyzes the formation of the alpha-1,6-glucosidic linkages in glycogen by scission of a 1,4-alpha-linked oligosaccharide from growing alpha-1,4-glucan chains and the subsequent attachment of the oligosaccharide to the alpha-1,6 position. The chain is 1,4-alpha-glucan branching enzyme GlgB from Picrophilus torridus (strain ATCC 700027 / DSM 9790 / JCM 10055 / NBRC 100828 / KAW 2/3).